We begin with the raw amino-acid sequence, 279 residues long: Protoheme IX farnesyltransferase (279 aa).

9 helical membrane passes run 1 to 21 (MIKPGIILGNIICLSGGFFLA), 29 to 49 (IFFLKTVFGLILIISSSCILN), 79 to 99 (ILFFFSIILLILGLLVFYIYI), 101 to 121 (FLCTIISFFGFFFYVYLYSYL), 128 to 148 (FSTFVGSVSGSLPPIIGYVAV), 156 to 176 (CTILFFMFSFWQIAHSYSIII), 200 to 220 (IIFISICILNLFFFNFLLYFF), 225 to 245 (FFYFLYTSFFIFLWFIFSFLS), and 254 to 274 (IWSRIMFFFSIFIIFMISFLM).

Belongs to the UbiA prenyltransferase family. Protoheme IX farnesyltransferase subfamily.

It localises to the cell membrane. It carries out the reaction heme b + (2E,6E)-farnesyl diphosphate + H2O = Fe(II)-heme o + diphosphate. It functions in the pathway porphyrin-containing compound metabolism; heme O biosynthesis; heme O from protoheme: step 1/1. Functionally, converts heme B (protoheme IX) to heme O by substitution of the vinyl group on carbon 2 of heme B porphyrin ring with a hydroxyethyl farnesyl side group. In Buchnera aphidicola subsp. Cinara cedri (strain Cc), this protein is Protoheme IX farnesyltransferase.